A 1041-amino-acid polypeptide reads, in one-letter code: Sodium/potassium-transporting ATPase subunit alpha (1041 aa).

The next 4 helical transmembrane spans lie at 115-135, 147-167, 312-332, and 338-358; these read FGGF…AYSI, NLYL…FSYY, LITG…FILG, and AVIF…LATV. Catalysis depends on Asp-394, which acts as the 4-aspartylphosphate intermediate. Lys-526 lines the ATP pocket. 4 consecutive transmembrane segments (helical) span residues 808–828, 870–890, 935–955, and 970–990; these read FLAF…ILCI, MAYG…YFVI, TCHT…LIIC, and WALN…SYCP.

Belongs to the cation transport ATPase (P-type) (TC 3.A.3) family. Type IIC subfamily. The sodium/potassium-transporting ATPase is composed of a catalytic alpha subunit, an auxiliary non-catalytic beta subunit and an additional regulatory subunit. In terms of tissue distribution, high levels are found in some adult tissues: Malpighian tubules, indirect flight muscles, tubular leg muscles and throughout the nervous system (brain, optic lobes, retina and ventral thoracic neuromere). Lower levels are detected at the posterior end where the reproductive organs and rectum are located.

The protein resides in the cell membrane. It catalyses the reaction K(+)(out) + Na(+)(in) + ATP + H2O = K(+)(in) + Na(+)(out) + ADP + phosphate + H(+). Its function is as follows. This is the catalytic component of the active enzyme, which catalyzes the hydrolysis of ATP coupled with the exchange of sodium and potassium ions across the plasma membrane. This action creates the electrochemical gradient of sodium and potassium ions, providing the energy for active transport of various nutrients. This is Sodium/potassium-transporting ATPase subunit alpha (Atpalpha) from Drosophila melanogaster (Fruit fly).